A 521-amino-acid chain; its full sequence is Tubulin-specific chaperone E (521 aa).

The CAP-Gly domain maps to 24–68 (GPVPPTAGVWLGVEWDHPERGKHDGSHDGVRYFTCRHPTGGSFVR). LRR repeat units lie at residues 147-168 (FVQS…AAIT), 173-194 (SLQE…SSLS), 199-220 (HLRV…HCAP), 224-245 (QVEE…EHVL), 247-268 (ALTV…EISH), 271-292 (RLER…DVPA), and 301-322 (ALKE…NELE). The 43-residue stretch at 335–377 (NPLLHKEKNLETARQIMIARLGQLELLDMRQILSDERRGAELD) folds into the LRRCT domain.

This sequence belongs to the TBCE family. Supercomplex made of cofactors A to E. Cofactors A and D function by capturing and stabilizing tubulin in a quasi-native conformation. Cofactor E binds to the cofactor D-tubulin complex; interaction with cofactor C then causes the release of tubulin polypeptides that are committed to the native state.

The protein resides in the cytoplasm. It localises to the cytoskeleton. Tubulin-folding protein; involved in the second step of the tubulin folding pathway. This is Tubulin-specific chaperone E (tbce) from Danio rerio (Zebrafish).